The sequence spans 360 residues: 3-dehydroquinate synthase (360 aa).

Residues D69–K74, G103–D107, T127–T128, K140, K149, and T167–T170 each bind NAD(+). Residues E182, H246, and H263 each coordinate Zn(2+).

This sequence belongs to the sugar phosphate cyclases superfamily. Dehydroquinate synthase family. Requires Co(2+) as cofactor. The cofactor is Zn(2+). NAD(+) serves as cofactor.

It localises to the cytoplasm. It carries out the reaction 7-phospho-2-dehydro-3-deoxy-D-arabino-heptonate = 3-dehydroquinate + phosphate. Its pathway is metabolic intermediate biosynthesis; chorismate biosynthesis; chorismate from D-erythrose 4-phosphate and phosphoenolpyruvate: step 2/7. Catalyzes the conversion of 3-deoxy-D-arabino-heptulosonate 7-phosphate (DAHP) to dehydroquinate (DHQ). The protein is 3-dehydroquinate synthase of Vesicomyosocius okutanii subsp. Calyptogena okutanii (strain HA).